We begin with the raw amino-acid sequence, 382 residues long: MVKFADESKIRVSSGKGGNGCIAFRREKYVPMGGPSGGDGGRGGDLIFEIRRNMRTLVHLRHKRVYKAKNGGGGEGSQRFGKKGDDCIIPLPPGCVIKDPETGKTILDFGDAEEGRFVFLKGGNGGWGNCHFKTSTNQAPKTALPGQEGETREIIVELNIIADIGLVGFPNAGKSSLLDYFTNARPKIAPYPFTTKIPNLGVLRVDEERDVIIADIPGILEGASEGIGLGIRFLKHIARSAGLAFLIDLSDDNYLRAYDILCKELESYSKELAQKKRIIIATKLDLPDTKERFTELKNAIPDQEILGISLYNEWGLEEVKKAFIRLADEMQKTKPQKESLDPYGQNKNFMTAELDDVSYEEKNDDEHFGATVSLSRKRKPKK.

The Obg domain maps to 2-161 (VKFADESKIR…REIIVELNII (160 aa)). Residues 162–328 (ADIGLVGFPN…VKKAFIRLAD (167 aa)) form the OBG-type G domain. GTP contacts are provided by residues 168-175 (GFPNAGKS), 193-197 (FTTKI), 215-218 (DIPG), 282-285 (TKLD), and 309-311 (SLY). Residues serine 175 and threonine 195 each contribute to the Mg(2+) site. The tract at residues 360 to 382 (EEKNDDEHFGATVSLSRKRKPKK) is disordered.

This sequence belongs to the TRAFAC class OBG-HflX-like GTPase superfamily. OBG GTPase family. Monomer. Mg(2+) is required as a cofactor.

The protein localises to the cytoplasm. Functionally, an essential GTPase which binds GTP, GDP and possibly (p)ppGpp with moderate affinity, with high nucleotide exchange rates and a fairly low GTP hydrolysis rate. Plays a role in control of the cell cycle, stress response, ribosome biogenesis and in those bacteria that undergo differentiation, in morphogenesis control. This is GTPase Obg from Treponema denticola (strain ATCC 35405 / DSM 14222 / CIP 103919 / JCM 8153 / KCTC 15104).